Reading from the N-terminus, the 70-residue chain is DNA-directed RNA polymerase subunit epsilon (70 aa).

Belongs to the RNA polymerase subunit epsilon family. As to quaternary structure, RNAP is composed of a core of 2 alpha, a beta and a beta' subunit. The core is associated with a delta subunit, and at least one of epsilon or omega. When a sigma factor is associated with the core the holoenzyme is formed, which can initiate transcription.

It catalyses the reaction RNA(n) + a ribonucleoside 5'-triphosphate = RNA(n+1) + diphosphate. In terms of biological role, a non-essential component of RNA polymerase (RNAP). The chain is DNA-directed RNA polymerase subunit epsilon from Enterococcus faecalis (strain ATCC 700802 / V583).